The following is a 255-amino-acid chain: 4-hydroxy-tetrahydrodipicolinate reductase (255 aa).

Residues 8-13 (GSTGRM), 88-90 (ATT), and 112-115 (SSNM) contribute to the NAD(+) site. His144 acts as the Proton donor/acceptor in catalysis. A (S)-2,3,4,5-tetrahydrodipicolinate-binding site is contributed by His145. Catalysis depends on Lys148, which acts as the Proton donor. 154 to 155 (GT) serves as a coordination point for (S)-2,3,4,5-tetrahydrodipicolinate.

The protein belongs to the DapB family.

Its subcellular location is the cytoplasm. It carries out the reaction (S)-2,3,4,5-tetrahydrodipicolinate + NAD(+) + H2O = (2S,4S)-4-hydroxy-2,3,4,5-tetrahydrodipicolinate + NADH + H(+). The enzyme catalyses (S)-2,3,4,5-tetrahydrodipicolinate + NADP(+) + H2O = (2S,4S)-4-hydroxy-2,3,4,5-tetrahydrodipicolinate + NADPH + H(+). Its pathway is amino-acid biosynthesis; L-lysine biosynthesis via DAP pathway; (S)-tetrahydrodipicolinate from L-aspartate: step 4/4. Its function is as follows. Catalyzes the conversion of 4-hydroxy-tetrahydrodipicolinate (HTPA) to tetrahydrodipicolinate. The chain is 4-hydroxy-tetrahydrodipicolinate reductase from Sulfurovum sp. (strain NBC37-1).